Here is an 87-residue protein sequence, read N- to C-terminus: MSNFSGFTKGNDIADLDAVAQTLKKPADDANKAVNDSIAALKDTPDNPALLADLQHSINKWSVIYNISSTIVRSMKDLMQGILQKFP.

This sequence belongs to the SctF family. In terms of assembly, the core secretion machinery of the T3SS is composed of approximately 20 different proteins, including cytoplasmic components, a base, an export apparatus and a needle. This subunit polymerizes and forms the helical needle filament. In Y.enterocolitica E40, the needles are composed of 139 (plus-minus 19) YscF/SctF subunits.

It is found in the secreted. It localises to the cell surface. With respect to regulation, the secretion and/or polymerization may be controlled by the type III secretion system regulator YopR. Its function is as follows. Component of the type III secretion system (T3SS), also called injectisome, which is used to inject bacterial effector proteins into eukaryotic host cells. YscF/SctF forms the external needle filament that protrudes from the bacterial surface. The needle is not sufficient by itself for the formation of a pore allowing translocation of the Yop effectors across the host cell membrane. The sequence is that of Type 3 secretion system needle filament protein from Yersinia enterocolitica.